A 287-amino-acid polypeptide reads, in one-letter code: Cell wall-binding protein YocH (287 aa).

The first 25 residues, 1–25 (MKKTIMSFVAVAALSTTAFGAHASA), serve as a signal peptide directing secretion. LysM domains follow at residues 26–69 (KEIT…KLTI) and 78–121 (GQYT…TLSV). Positions 130–143 (TATENAQTNAPQAA) are enriched in low complexity. The segment at 130 to 193 (TATENAQTNA…SNTNNQEASK (64 aa)) is disordered. Residues 165 to 181 (QETKAEAETSVNTEEKA) show a composition bias toward basic and acidic residues. The segment covering 182–193 (VQSNTNNQEASK) has biased composition (polar residues).

Its subcellular location is the secreted. It localises to the cell wall. This is Cell wall-binding protein YocH (yocH) from Bacillus subtilis (strain 168).